The chain runs to 215 residues: Adenylate kinase (215 aa).

10-15 contacts ATP; it reads GAGKGT. Residues 30–59 are NMP; the sequence is STGDMFRKAIKDETDLGKEAKSYMDRGELV. AMP is bound by residues Thr31, Arg36, 57–59, 85–88, and Gln92; these read ELV and GFPR. The interval 126-163 is LID; sequence GRRICEKCGTTYHLVFNPPKVDGICDIDGGKLYQREDD. Arg127 serves as a coordination point for ATP. Residues Cys130 and Cys133 each contribute to the Zn(2+) site. 136-137 contacts ATP; sequence TY. Positions 150 and 153 each coordinate Zn(2+). AMP-binding residues include Arg160 and Arg171. Lys199 is a binding site for ATP.

The protein belongs to the adenylate kinase family. As to quaternary structure, monomer.

The protein resides in the cytoplasm. It catalyses the reaction AMP + ATP = 2 ADP. Its pathway is purine metabolism; AMP biosynthesis via salvage pathway; AMP from ADP: step 1/1. In terms of biological role, catalyzes the reversible transfer of the terminal phosphate group between ATP and AMP. Plays an important role in cellular energy homeostasis and in adenine nucleotide metabolism. The protein is Adenylate kinase of Staphylococcus epidermidis (strain ATCC 35984 / DSM 28319 / BCRC 17069 / CCUG 31568 / BM 3577 / RP62A).